A 299-amino-acid chain; its full sequence is tRNA(Met) cytidine acetate ligase (299 aa).

ATP contacts are provided by residues 6–19 (IAEY…HIYM), glycine 100, asparagine 157, and arginine 182.

This sequence belongs to the TmcAL family.

It localises to the cytoplasm. The enzyme catalyses cytidine(34) in elongator tRNA(Met) + acetate + ATP = N(4)-acetylcytidine(34) in elongator tRNA(Met) + AMP + diphosphate. In terms of biological role, catalyzes the formation of N(4)-acetylcytidine (ac(4)C) at the wobble position of elongator tRNA(Met), using acetate and ATP as substrates. First activates an acetate ion to form acetyladenylate (Ac-AMP) and then transfers the acetyl group to tRNA to form ac(4)C34. The polypeptide is tRNA(Met) cytidine acetate ligase (Mycoplasma mobile (strain ATCC 43663 / 163K / NCTC 11711) (Mesomycoplasma mobile)).